A 269-amino-acid polypeptide reads, in one-letter code: MPRFALTVIRHGETRLNKEKIIQGQGVDAPLSETGFRQAAAAGQFLSNVQFTHAFSSDLTRTKQTIHGILEKSRFCKDMAVKYDSRLRERMYGVAEGKPLSELRAMAKAAGEECPMFTPPGGETVEQVKMRGKDFFDFICQLILGKAGQRESVLPGAPGSGLESSLAEVFPVGKHGSLGANPKGGTLGLAASILVVSHGAYMRSLFGYFLSDLRCSLPGARDKLELSSITPNTGISVFIIDCEEARQPSIQCVCMNLQEHLNGVTEKQH.

The active-site Tele-phosphohistidine intermediate is the histidine 11. Glutamate 89 (proton donor/acceptor) is an active-site residue.

This sequence belongs to the phosphoglycerate mutase family. Interacts with HK2; the interaction increases hexokinase HK2 activity in a hypoxia- and HIF1A-dependent manner, resulting in the regulation of mitochondrial membrane potential, thus increasing NADPH production and decreasing intracellular ROS levels. In terms of tissue distribution, expressed in olfactory bulb, cerebellum, and cortex. Expressed in neurons and astrocytes (at protein level). Expressed in intestinal crypt.

Its subcellular location is the cytoplasm. The protein resides in the nucleus. It localises to the mitochondrion. It carries out the reaction beta-D-fructose 2,6-bisphosphate + H2O = beta-D-fructose 6-phosphate + phosphate. In terms of biological role, fructose-bisphosphatase hydrolyzing fructose-2,6-bisphosphate as well as fructose-1,6-bisphosphate. Acts as a negative regulator of glycolysis by lowering intracellular levels of fructose-2,6-bisphosphate in a p53/TP53-dependent manner, resulting in the pentose phosphate pathway (PPP) activation and NADPH production. Contributes to the generation of reduced glutathione to cause a decrease in intracellular reactive oxygen species (ROS) content, correlating with its ability to protect cells from oxidative or metabolic stress-induced cell death. Plays a role in promoting protection against cell death during hypoxia by decreasing mitochondria ROS levels in a HK2-dependent manner through a mechanism that is independent of its fructose-bisphosphatase activity. In response to cardiac damage stress, mediates p53-induced inhibition of myocyte mitophagy through ROS levels reduction and the subsequent inactivation of BNIP3. Reduced mitophagy results in an enhanced apoptotic myocyte cell death, and exacerbates cardiac damage. Plays a role in adult intestinal regeneration; contributes to the growth, proliferation and survival of intestinal crypts following tissue ablation. Plays a neuroprotective role against ischemic brain damage by enhancing PPP flux and preserving mitochondria functions. Protects glioma cells from hypoxia- and ROS-induced cell death by inhibiting glycolysis and activating mitochondrial energy metabolism and oxygen consumption in a TKTL1-dependent and p53/TP53-independent manner. Plays a role in cancer cell survival by promoting DNA repair through activating PPP flux in a CDK5-ATM-dependent signaling pathway during hypoxia and/or genome stress-induced DNA damage responses. Involved in intestinal tumor progression. This Mus musculus (Mouse) protein is Fructose-2,6-bisphosphatase TIGAR.